The sequence spans 380 residues: Protein neprosin (380 aa).

A signal peptide spans 1-24 (MQAKFFTFVILSSVFYFNYPLAEA). The propeptide at 25-128 (RSIQARLANK…QFPNLKFAPP (104 aa)) is activation peptide. A disulfide bond links Cys52 and Cys98. 3 N-linked (GlcNAc...) asparagine glycosylation sites follow: Asn68, Asn145, and Asn152. Residues 129–380 (SANTNHQYAV…YLFYGGPGCQ (252 aa)) form the Neprosin PEP catalytic domain. Residue Glu188 is part of the active site. The cysteines at positions 219 and 224 are disulfide-linked. N-linked (GlcNAc...) asparagine glycosylation occurs at Asn253. Glu297 is an active-site residue. The cysteines at positions 358 and 379 are disulfide-linked.

It belongs to the peptidase G3 family.

Its subcellular location is the secreted. The catalysed reaction is Hydrolysis of Pro-|-Xaa &gt;&gt; Ala-|-Xaa in oligopeptides.. Its activity is regulated as follows. Weakly inhibited by the aspartic protease inhibitor pepstatin. Weakly inhibited by pepstatin A (IC(50) of 140 uM) and 1,2-epoxy-3-(p-nitrophenoxy)propane (EPNP) (IC(50) of 480 uM). Activity is not affected by the POP inhibitor Z-Pro-prolinal inhibitor or the denaturant urea. Functionally, glutamic endopeptidase that preferentially cleaves peptide bonds on the C-terminal side of proline residues. Also cleaves peptide bonds on the C-terminal side of alanine residues but with less efficiency. In contrast to most proline-cleaving enzymes, effectively degrades proteins of any size. Found in the viscoelastic fluid of the pitcher, and so likely functions in the digestion of their prey. This is Protein neprosin from Nepenthes x ventrata (Red tropical pitcher plant).